A 1132-amino-acid polypeptide reads, in one-letter code: Ubiquitin-associated protein 2 (1132 aa).

Residues 1 to 29 form a disordered region; sequence MMTSVSNDRCRGAREKPQMPTAHAAQSQK. A compositionally biased stretch (basic and acidic residues) spans 8–17; sequence DRCRGAREKP. The UBA domain occupies 48–92; it reads KNDSDFEAKVKQLMEVTGKNQDECIVALHDCNGDVNKAINILLEG. Disordered regions lie at residues 95–202, 221–248, 331–351, 380–479, 602–679, 713–749, 875–919, 996–1033, 1040–1059, and 1087–1132; these read DTTS…YSES, GTDE…YGLK, NNQM…SPQS, LKPP…STVS, TSSA…VSTL, PLSQ…VEST, PYSG…LNPG, GGYG…GSVY, DKQG…SALG, and PHSQ…YWTN. Residues 109–130 are compositionally biased toward basic and acidic residues; sequence FGRESSENKENREKRTEREASR. An Omega-N-methylarginine modification is found at arginine 166. The span at 168–182 shows a compositional bias: basic residues; it reads KRARGRGFGRGRGRG. Polar residues-rich tracts occupy residues 233–244 and 331–340; these read HSMSQEPPSKSS and NNQMAPGTAN. Over residues 341–351 the composition is skewed to low complexity; that stretch reads STSASSYSPQS. Residues 392 to 404 show a composition bias toward polar residues; it reads SSAQQNDTASPPA. 2 positions are modified to phosphoserine: serine 433 and serine 440. Composition is skewed to low complexity over residues 436 to 448 and 602 to 618; these read LSQL…HQTQ and TSSA…SSSY. Over residues 619–630 the composition is skewed to polar residues; the sequence is DQSSVHTRIAYQ. Position 631 is a phosphoserine (serine 631). The segment covering 631–644 has biased composition (low complexity); sequence SSASPPDSAPGSVA. A compositionally biased stretch (polar residues) spans 652 to 662; the sequence is SQHTVDTTSSV. The segment covering 713-722 has biased composition (low complexity); sequence PLSQLSSSLS. Residues 723 to 742 are compositionally biased toward polar residues; that stretch reads GHQNSMTSAHATRSTSTPHT. Low complexity predominate over residues 897-914; that stretch reads PAQAQQSQSQTHHTAQQP. Positions 1101–1115 are enriched in low complexity; it reads PSGSGQRSQPSSLQP. Polar residues predominate over residues 1116–1132; that stretch reads KSQASKPTYGSAPYWTN.

May interact with ANXA2.

The protein localises to the nucleus. It localises to the chromosome. The protein resides in the cytoplasm. Functionally, recruits the ubiquitination machinery to RNA polymerase II for polyubiquitination, removal and degradation, when the transcription-coupled nucleotide excision repair (TC-NER) machinery fails to resolve DNA damage. May promote the degradation of ANXA2. In Mus musculus (Mouse), this protein is Ubiquitin-associated protein 2.